A 213-amino-acid polypeptide reads, in one-letter code: Thymidylate kinase (213 aa).

10–17 provides a ligand contact to ATP; sequence GPDGAGKT.

Belongs to the thymidylate kinase family.

The catalysed reaction is dTMP + ATP = dTDP + ADP. In terms of biological role, phosphorylation of dTMP to form dTDP in both de novo and salvage pathways of dTTP synthesis. This is Thymidylate kinase from Limosilactobacillus reuteri (strain DSM 20016) (Lactobacillus reuteri).